A 263-amino-acid chain; its full sequence is 3-deoxy-manno-octulosonate cytidylyltransferase (263 aa).

The protein belongs to the KdsB family.

The protein localises to the cytoplasm. It catalyses the reaction 3-deoxy-alpha-D-manno-oct-2-ulosonate + CTP = CMP-3-deoxy-beta-D-manno-octulosonate + diphosphate. Its pathway is nucleotide-sugar biosynthesis; CMP-3-deoxy-D-manno-octulosonate biosynthesis; CMP-3-deoxy-D-manno-octulosonate from 3-deoxy-D-manno-octulosonate and CTP: step 1/1. The protein operates within bacterial outer membrane biogenesis; lipopolysaccharide biosynthesis. Activates KDO (a required 8-carbon sugar) for incorporation into bacterial lipopolysaccharide in Gram-negative bacteria. In Burkholderia cenocepacia (strain ATCC BAA-245 / DSM 16553 / LMG 16656 / NCTC 13227 / J2315 / CF5610) (Burkholderia cepacia (strain J2315)), this protein is 3-deoxy-manno-octulosonate cytidylyltransferase.